Here is a 212-residue protein sequence, read N- to C-terminus: Ras-like protein (212 aa).

15-22 provides a ligand contact to GTP; sequence GGGGVGKS. The short motif at 37–45 is the Effector region element; sequence YDPTIEDSY. Residues 62–66 and 121–124 each bind GTP; these read DTAGQ and NKCD. Residues Cys-205 and Cys-206 are each lipidated (S-palmitoyl cysteine). The residue at position 209 (Cys-209) is a Cysteine methyl ester. Cys-209 carries the S-geranylgeranyl cysteine lipid modification. Residues 210–212 constitute a propeptide, removed in mature form; that stretch reads IVM.

The protein belongs to the small GTPase superfamily. Ras family.

Its subcellular location is the cell membrane. It catalyses the reaction GTP + H2O = GDP + phosphate + H(+). Its activity is regulated as follows. Alternates between an inactive form bound to GDP and an active form bound to GTP. Activated by a guanine nucleotide-exchange factor (GEF) and inactivated by a GTPase-activating protein (GAP). The protein is Ras-like protein (rasA) of Emericella nidulans (strain FGSC A4 / ATCC 38163 / CBS 112.46 / NRRL 194 / M139) (Aspergillus nidulans).